Reading from the N-terminus, the 449-residue chain is Packaging protein 1 (449 aa).

The segment at 1 to 78 (METRGRRPAA…PAKRGDMLDR (78 aa)) is disordered. 171 to 178 (GPTGCGKS) lines the ATP pocket. The interval 440 to 449 (RAYRARKTPK) is DNA-binding.

The protein belongs to the adenoviridae packaging protein 1 family. Homodimer. Part of a genome packaging complex composed of packaging proteins 1, 2 and 3; this complex specifically binds to the packaging sequence on the left end of viral genomic DNA and performs packaging of the viral genome. Interacts with protein 33K.

Its subcellular location is the virion. The protein localises to the host nucleus. It localises to the host nucleoplasm. It is found in the host nucleolus. In terms of biological role, component of the packaging machinery which encapsidates the viral DNA into preformed capsids and transcriptional activator of the viral major late promoter (MLP). Binds, along with packaging proteins 2 and 3, to the specific packaging sequence on the left end of viral genomic DNA and displays ATPase activity thereby providing the power stroke of the packaging machinery. The activity of packaging protein IVa2 is stimulated by protein 33K which acts as a terminase. May be the protein that pumps DNA into the capsid powered by ATP hydrolysis. Specifically binds to the 5'-CG-3' nucleotides of the repeats making up the packaging sequence. Component of the DEF-A and DEF-B transcription factors that bind downstream elements of the major late promoter (MLP), and stimulate transcription from the MLP after initiation of viral DNA replication. DEF-A is a heterodimer packaging proteins 1 and 2 and DEF-B is a homodimer of packaging protein 1. In Human adenovirus C serotype 5 (HAdV-5), this protein is Packaging protein 1.